Consider the following 156-residue polypeptide: Small ribosomal subunit protein uS7 (156 aa).

The protein belongs to the universal ribosomal protein uS7 family. As to quaternary structure, part of the 30S ribosomal subunit. Contacts proteins S9 and S11.

Functionally, one of the primary rRNA binding proteins, it binds directly to 16S rRNA where it nucleates assembly of the head domain of the 30S subunit. Is located at the subunit interface close to the decoding center, probably blocks exit of the E-site tRNA. This is Small ribosomal subunit protein uS7 from Buchnera aphidicola subsp. Baizongia pistaciae (strain Bp).